A 227-amino-acid polypeptide reads, in one-letter code: Small ribosomal subunit protein uS3 (227 aa).

The KH type-2 domain occupies 24–94; the sequence is LDEYLEEELG…RVSIEVKELP (71 aa). Positions 207–227 are disordered; it reads EEVEDELKELIGKSEDEAEGA.

Belongs to the universal ribosomal protein uS3 family. As to quaternary structure, part of the 30S ribosomal subunit.

Binds the lower part of the 30S subunit head. The chain is Small ribosomal subunit protein uS3 from Methanopyrus kandleri (strain AV19 / DSM 6324 / JCM 9639 / NBRC 100938).